The primary structure comprises 164 residues: Siroheme decarboxylase alpha subunit (164 aa).

The protein belongs to the Ahb/Nir family. As to quaternary structure, forms a heterodimer composed of AhbA and AhbB.

The catalysed reaction is siroheme + 2 H(+) = 12,18-didecarboxysiroheme + 2 CO2. Its pathway is porphyrin-containing compound metabolism; protoheme biosynthesis. In terms of biological role, involved in siroheme-dependent heme b biosynthesis. Catalyzes the decarboxylation of siroheme into didecarboxysiroheme. This Oleidesulfovibrio alaskensis (strain ATCC BAA-1058 / DSM 17464 / G20) (Desulfovibrio alaskensis) protein is Siroheme decarboxylase alpha subunit.